The primary structure comprises 313 residues: Porphobilinogen deaminase (313 aa).

Cys242 bears the S-(dipyrrolylmethanemethyl)cysteine mark.

It belongs to the HMBS family. As to quaternary structure, monomer. Dipyrromethane serves as cofactor.

It carries out the reaction 4 porphobilinogen + H2O = hydroxymethylbilane + 4 NH4(+). The protein operates within porphyrin-containing compound metabolism; protoporphyrin-IX biosynthesis; coproporphyrinogen-III from 5-aminolevulinate: step 2/4. In terms of biological role, tetrapolymerization of the monopyrrole PBG into the hydroxymethylbilane pre-uroporphyrinogen in several discrete steps. The sequence is that of Porphobilinogen deaminase from Escherichia coli O17:K52:H18 (strain UMN026 / ExPEC).